Here is a 382-residue protein sequence, read N- to C-terminus: UDP-4-amino-4-deoxy-L-arabinose--oxoglutarate aminotransferase (382 aa).

Position 183 is an N6-(pyridoxal phosphate)lysine (lysine 183).

The protein belongs to the DegT/DnrJ/EryC1 family. ArnB subfamily. As to quaternary structure, homodimer. Pyridoxal 5'-phosphate is required as a cofactor.

The catalysed reaction is UDP-4-amino-4-deoxy-beta-L-arabinose + 2-oxoglutarate = UDP-beta-L-threo-pentopyranos-4-ulose + L-glutamate. The protein operates within nucleotide-sugar biosynthesis; UDP-4-deoxy-4-formamido-beta-L-arabinose biosynthesis; UDP-4-deoxy-4-formamido-beta-L-arabinose from UDP-alpha-D-glucuronate: step 2/3. It participates in bacterial outer membrane biogenesis; lipopolysaccharide biosynthesis. Catalyzes the conversion of UDP-4-keto-arabinose (UDP-Ara4O) to UDP-4-amino-4-deoxy-L-arabinose (UDP-L-Ara4N). The modified arabinose is attached to lipid A and is required for resistance to polymyxin and cationic antimicrobial peptides. The polypeptide is UDP-4-amino-4-deoxy-L-arabinose--oxoglutarate aminotransferase (Pseudomonas syringae pv. syringae (strain B728a)).